A 596-amino-acid polypeptide reads, in one-letter code: MAGAIASRMSFSSLKRKQPKTFTVRIVTMDAEMEFNCEMKWKGKDLFDLVCRTLGLRETWFFGLQYTIKDTVAWLKMDKKVLDHDVSKEEPVTFHFLAKFYPENAEEELVQEITQHLFFLQVKKQILDEKVYCPPEASVLLASYAVQAKYGDYDPSVHKRGFLAQEELLPKRVINLYQMTPEMWEERITAWYAEHRGRARDEAEMEYLKIAQDLEMYGVNYFTIRNKKGTELLLGVDALGLHIYDPENRLTPKISFPWNEIRNISYSDKEFTIKPLDKKIDVFKFNSSKLRVNKLILQLCIGNHDLFMRRRKADSLEVQQMKAQAREEKARKQMERQRLAREKQMREEAERTRDELERRLLQMKEEATMANEALMRSEETADLLAEKAQITEEEAKLLAQKAAEAEQEMQRIKATAIRTEEEKRLMEQKVLEAEVLALKMAEESERRAKEADQLKQDLQEAREAERRAKQKLLEIATKPTYPPMNPIPPPLPPDIPSFDIIADSLSFDFKDTDMKRLSMEIEKEKVEYMEKSKHLQEQLNELKTEIEALKLKERETALDVLHSESSDRGGPSSKHNTIKKLTLQSAKSRVAFFEEL.

Serine 13 carries the phosphoserine modification. Residues 22 to 311 (FTVRIVTMDA…GNHDLFMRRR (290 aa)) enclose the FERM domain. The residue at position 518 (serine 518) is a Phosphoserine; by PAK. The segment at 560–580 (VLHSESSDRGGPSSKHNTIKK) is disordered.

Interacts with NHERF1, HGS and AGAP2. Interacts with SGSM3. Interacts (via FERM domain) with MPP1. Interacts with LAYN. Interacts with WWC1. Interacts with the CUL4A-RBX1-DDB1-VprBP/DCAF1 E3 ubiquitin-protein ligase complex. The unphosphorylated form interacts (via FERM domain) with VPRBP/DCAF1. Interacts (via FERM domain) with NOP53; the interaction is direct. Interacts with SCHIP1; the interaction is direct. In terms of processing, phosphorylation of Ser-518 inhibits nuclear localization by disrupting the intramolecular association of the FERM domain with the C-terminal tail. The dephosphorylation of Ser-518 favors the interaction with NOP53. Ubiquitinated by the CUL4A-RBX1-DDB1-DCAF1/VprBP E3 ubiquitin-protein ligase complex for ubiquitination and subsequent proteasome-dependent degradation.

Its subcellular location is the cell membrane. It localises to the cell projection. The protein localises to the cytoplasm. The protein resides in the cytoskeleton. It is found in the nucleus. Its function is as follows. Probable regulator of the Hippo/SWH (Sav/Wts/Hpo) signaling pathway, a signaling pathway that plays a pivotal role in tumor suppression by restricting proliferation and promoting apoptosis. Along with WWC1 can synergistically induce the phosphorylation of LATS1 and LATS2 and can probably function in the regulation of the Hippo/SWH (Sav/Wts/Hpo) signaling pathway. May act as a membrane stabilizing protein. May inhibit PI3 kinase by binding to AGAP2 and impairing its stimulating activity. Suppresses cell proliferation and tumorigenesis by inhibiting the CUL4A-RBX1-DDB1-VprBP/DCAF1 E3 ubiquitin-protein ligase complex. Plays a role in lens development and is required for complete fiber cell terminal differentiation, maintenance of cell polarity and separation of the lens vesicle from the corneal epithelium. In Mus musculus (Mouse), this protein is Merlin (Nf2).